The following is a 125-amino-acid chain: UPF0102 protein Mpop_0474 (125 aa).

This sequence belongs to the UPF0102 family.

This chain is UPF0102 protein Mpop_0474, found in Methylorubrum populi (strain ATCC BAA-705 / NCIMB 13946 / BJ001) (Methylobacterium populi).